Consider the following 83-residue polypeptide: ATP synthase subunit 9, mitochondrial (83 aa).

2 consecutive transmembrane segments (helical) span residues 8–28 (IGAG…GNVL) and 45–72 (SFGY…LISS).

The protein belongs to the ATPase C chain family. In terms of assembly, F-type ATPases have 2 components, CF(1) - the catalytic core - and CF(0) - the membrane proton channel. CF(1) has five subunits: alpha(3), beta(3), gamma(1), delta(1), epsilon(1). CF(0) has three main subunits: a, b and c.

The protein resides in the mitochondrion membrane. This protein is one of the chains of the nonenzymatic membrane component (F0) of mitochondrial ATPase. This is ATP synthase subunit 9, mitochondrial (ATP9) from Helianthus annuus (Common sunflower).